Consider the following 256-residue polypeptide: Small ribosomal subunit protein eS1 (256 aa).

An N-acetylalanine; partial modification is found at Ala2.

It belongs to the eukaryotic ribosomal protein eS1 family. As to quaternary structure, component of the small ribosomal subunit. Mature ribosomes consist of a small (40S) and a large (60S) subunit. The 40S subunit contains about 33 different proteins and 1 molecule of RNA (18S). The 60S subunit contains about 49 different proteins and 3 molecules of RNA (25S, 5.8S and 5S).

It is found in the cytoplasm. The sequence is that of Small ribosomal subunit protein eS1 (rps1) from Botryotinia fuckeliana (strain B05.10) (Noble rot fungus).